A 255-amino-acid chain; its full sequence is Electron transfer flavoprotein subunit beta (255 aa).

Alanine 2 bears the N-acetylalanine mark. AMP is bound by residues alanine 9, 39–42, cysteine 66, and 123–134; these read NPFC and GKQAIDDDCNQT. A recognition loop region spans residues 183 to 205; the sequence is ADLRLNEPRYATLPNIMKAKKKK. Lysine 200 carries the N6,N6,N6-trimethyllysine; by ETFBKMT; alternate modification. Lysine 200 is modified (N6-acetyllysine; alternate). At lysine 200 the chain carries N6-methyllysine; alternate. Lysine 203 is modified (N6,N6,N6-trimethyllysine; by ETFBKMT). N6-acetyllysine; alternate is present on lysine 210. The residue at position 210 (lysine 210) is an N6-succinyllysine; alternate. A phosphoserine mark is found at serine 223 and serine 226. At lysine 238 the chain carries N6-acetyllysine. Lysine 248 carries the N6-acetyllysine; alternate modification. Lysine 248 carries the post-translational modification N6-succinyllysine; alternate.

It belongs to the ETF beta-subunit/FixA family. Heterodimer composed of ETFA and ETFB. Identified in a complex that contains ETFA, ETFB and ETFRF1. Interacts with ACADM. Methylated. Trimethylation at Lys-200 and Lys-203 may negatively regulate the activity in electron transfer from acyl-CoA dehydrogenases.

The protein resides in the mitochondrion matrix. Its function is as follows. Heterodimeric electron transfer flavoprotein that accepts electrons from several mitochondrial dehydrogenases, including acyl-CoA dehydrogenases, glutaryl-CoA and sarcosine dehydrogenase. It transfers the electrons to the main mitochondrial respiratory chain via ETF-ubiquinone oxidoreductase. Required for normal mitochondrial fatty acid oxidation and normal amino acid metabolism. ETFB binds an AMP molecule that probably has a purely structural role. The chain is Electron transfer flavoprotein subunit beta from Sus scrofa (Pig).